The sequence spans 90 residues: Small ribosomal subunit protein bS20 (90 aa).

This sequence belongs to the bacterial ribosomal protein bS20 family.

Functionally, binds directly to 16S ribosomal RNA. This is Small ribosomal subunit protein bS20 from Fusobacterium nucleatum subsp. nucleatum (strain ATCC 25586 / DSM 15643 / BCRC 10681 / CIP 101130 / JCM 8532 / KCTC 2640 / LMG 13131 / VPI 4355).